The following is a 271-amino-acid chain: Phosphate import ATP-binding protein PstB 2 (271 aa).

Positions 25 to 266 constitute an ABC transporter domain; it reads MATEDLHVYY…PQQKQTEDYI (242 aa). 57-64 contacts ATP; that stretch reads GPSGCGKS.

This sequence belongs to the ABC transporter superfamily. Phosphate importer (TC 3.A.1.7) family. The complex is composed of two ATP-binding proteins (PstB), two transmembrane proteins (PstC and PstA) and a solute-binding protein (PstS).

It localises to the cell membrane. It catalyses the reaction phosphate(out) + ATP + H2O = ADP + 2 phosphate(in) + H(+). Functionally, part of the ABC transporter complex PstSACB involved in phosphate import. Responsible for energy coupling to the transport system. The chain is Phosphate import ATP-binding protein PstB 2 from Listeria monocytogenes serotype 4b (strain F2365).